We begin with the raw amino-acid sequence, 647 residues long: Leucine aminopeptidase 2 (647 aa).

Substrate contacts are provided by residues Gln169 to Gln171 and Pro295 to Glu300. A Zn(2+)-binding site is contributed by His324. Residue Glu325 is the Proton acceptor of the active site. Zn(2+) is bound by residues His328 and Glu347. The active-site Proton donor is Tyr418.

This sequence belongs to the peptidase M1 family. Requires Zn(2+) as cofactor.

It is found in the cytoplasm. The protein localises to the nucleus. It catalyses the reaction an epoxide + H2O = an ethanediol. Its function is as follows. Aminopeptidase that preferentially cleaves di- and tripeptides. Also has low epoxide hydrolase activity (in vitro). Can hydrolyze the epoxide leukotriene LTA(4) but it forms preferentially 5,6-dihydroxy-7,9,11,14-eicosatetraenoic acid rather than the cytokine leukotriene B(4) as the product compared to the homologous mammalian enzyme (in vitro). This Yarrowia lipolytica (strain CLIB 122 / E 150) (Yeast) protein is Leucine aminopeptidase 2.